A 353-amino-acid polypeptide reads, in one-letter code: Heterogeneous nuclear ribonucleoproteins A2/B1 (353 aa).

The residue at position 1 (Met1) is an N-acetylmethionine. Thr4 bears the Phosphothreonine mark. A Nuclear localization signal motif is present at residues 9–15 (PLERKKR). RRM domains follow at residues 21–104 (RKLF…ESGK) and 112–191 (KKLF…LSRQ). Lys22 is covalently cross-linked (Glycyl lysine isopeptide (Lys-Gly) (interchain with G-Cter in SUMO2)). Phosphoserine is present on Ser29. An Omega-N-methylarginine modification is found at Arg38. A Phosphoserine modification is found at Ser85. The residue at position 104 (Lys104) is an N6,N6-dimethyllysine; alternate. Lys104 participates in a covalent cross-link: Glycyl lysine isopeptide (Lys-Gly) (interchain with G-Cter in SUMO2); alternate. Residues Lys112, Lys120, and Lys137 each participate in a glycyl lysine isopeptide (Lys-Gly) (interchain with G-Cter in SUMO2) cross-link. The residue at position 140 (Thr140) is a Phosphothreonine. A Phosphoserine modification is found at Ser149. Lys152 is covalently cross-linked (Glycyl lysine isopeptide (Lys-Gly) (interchain with G-Cter in SUMO2)). The residue at position 159 (Thr159) is a Phosphothreonine. Residues Lys168 and Lys173 each participate in a glycyl lysine isopeptide (Lys-Gly) (interchain with G-Cter in SUMO2); alternate cross-link. N6-acetyllysine; alternate is present on residues Lys168 and Lys173. Position 176 is a phosphothreonine (Thr176). Residue Lys186 forms a Glycyl lysine isopeptide (Lys-Gly) (interchain with G-Cter in SUMO2) linkage. Phosphoserine occurs at positions 189 and 201. The disordered stretch occupies residues 193-353 (MQEVQSSRSG…SGGYGGRSRY (161 aa)). Residues 202–223 (GRGGNFGFGDSRGGGGNFGPGP) show a composition bias toward gly residues. Arg203 carries the asymmetric dimethylarginine; alternate modification. At Arg203 the chain carries Dimethylated arginine; alternate. Arg203 carries the omega-N-methylarginine; alternate modification. A Phosphoserine modification is found at Ser212. Residue Arg213 is modified to Asymmetric dimethylarginine; alternate. The residue at position 213 (Arg213) is a Dimethylated arginine; alternate. Arg213 is modified (omega-N-methylarginine; alternate). Ser225 is subject to Phosphoserine. Residue Arg228 is modified to Omega-N-methylarginine. 2 positions are modified to phosphoserine: Ser231 and Ser236. Residue Arg238 is modified to Omega-N-methylarginine. Position 259 is a phosphoserine (Ser259). Residue Arg266 is modified to Asymmetric dimethylarginine; alternate. Arg266 carries the post-translational modification Omega-N-methylarginine; alternate. Residues 308–347 (QQPSNYGPMKSGNFGGSRNMGGPYGGGNYGPGGSGGSGGY) form a nuclear targeting sequence region. The segment covering 320 to 353 (NFGGSRNMGGPYGGGNYGPGGSGGSGGYGGRSRY) has biased composition (gly residues). The residue at position 324 (Ser324) is a Phosphoserine. An Omega-N-methylarginine modification is found at Arg325. Residue Tyr331 is modified to Phosphotyrosine. Residues Ser341 and Ser344 each carry the phosphoserine modification. A Phosphotyrosine modification is found at Tyr347. Residue Arg350 is modified to Omega-N-methylarginine.

Identified in the spliceosome C complex. Identified in a IGF2BP1-dependent mRNP granule complex containing untranslated mRNAs. Interacts with IGF2BP1. Interacts with C9orf72. Interacts with DGCR8. Interacts with TARDBP. Interacts with CKAP5. Interacts with PPIA/CYPA. Interacts (via C-terminus) with FAM76B; the interaction results in retention of HNRNPA2B1 in the nucleus and inhibition of the NF-kappa-B-mediated inflammatory pathway. Interacts with NF-kappa-B inhibitors NFKBIA and NFKBIE; the interaction may be mediated by the RRM2 domain of HNRNPA2B1, and HNRNPA2B1 may interact simultaneously with FAM76B and either NFKBIA or NFKBIE to form a complex. In terms of processing, sumoylated in exosomes, promoting miRNAs-binding. Asymmetric dimethylation at Arg-266 constitutes the major methylation site. According to a report, methylation affects subcellular location and promotes nuclear localization. According to another report, methylation at Arg-266 does not influence nucleocytoplasmic shuttling.

It is found in the nucleus. The protein localises to the nucleoplasm. It localises to the cytoplasmic granule. The protein resides in the secreted. Its subcellular location is the extracellular exosome. Functionally, heterogeneous nuclear ribonucleoprotein (hnRNP) that associates with nascent pre-mRNAs, packaging them into hnRNP particles. The hnRNP particle arrangement on nascent hnRNA is non-random and sequence-dependent and serves to condense and stabilize the transcripts and minimize tangling and knotting. Packaging plays a role in various processes such as transcription, pre-mRNA processing, RNA nuclear export, subcellular location, mRNA translation and stability of mature mRNAs. Forms hnRNP particles with at least 20 other different hnRNP and heterogeneous nuclear RNA in the nucleus. Involved in transport of specific mRNAs to the cytoplasm in oligodendrocytes and neurons: acts by specifically recognizing and binding the A2RE (21 nucleotide hnRNP A2 response element) or the A2RE11 (derivative 11 nucleotide oligonucleotide) sequence motifs present on some mRNAs, and promotes their transport to the cytoplasm. Specifically binds single-stranded telomeric DNA sequences, protecting telomeric DNA repeat against endonuclease digestion. Also binds other RNA molecules, such as primary miRNA (pri-miRNAs): acts as a nuclear 'reader' of the N6-methyladenosine (m6A) mark by specifically recognizing and binding a subset of nuclear m6A-containing pri-miRNAs. Binding to m6A-containing pri-miRNAs promotes pri-miRNA processing by enhancing binding of DGCR8 to pri-miRNA transcripts. Involved in miRNA sorting into exosomes following sumoylation, possibly by binding (m6A)-containing pre-miRNAs. Acts as a regulator of efficiency of mRNA splicing, possibly by binding to m6A-containing pre-mRNAs. Plays a role in the splicing of pyruvate kinase PKM by binding repressively to sequences flanking PKM exon 9, inhibiting exon 9 inclusion and resulting in exon 10 inclusion and production of the PKM M2 isoform. The polypeptide is Heterogeneous nuclear ribonucleoproteins A2/B1 (HNRNPA2B1) (Pongo abelii (Sumatran orangutan)).